The sequence spans 80 residues: Small ribosomal subunit protein bS16c (80 aa).

This sequence belongs to the bacterial ribosomal protein bS16 family.

It is found in the plastid. The protein resides in the chloroplast. The chain is Small ribosomal subunit protein bS16c from Lotus japonicus (Lotus corniculatus var. japonicus).